Reading from the N-terminus, the 322-residue chain is MDTSSINAQSIFDDNAATLKLSWLTGHEGWERGFSSDTVANATSSADLVGHLNLIHPNRIQVLGEAEIDYYQRQTDEDRSRHMAELIALEPPFLVVAGGAAAPPELVLRCTRSSTPLFTTPMSAAAVIDSLRLYMSRILAPRATLHGVFLDILGMGVLLTGDSGLGKSELGLELISRGHGLVADDAVDFVRLGPDFVEGRCPPLLQNLLEVRGLGLLDIKTIFGETAVRRKMKLKLIVQLVRRPDGEFQRLPLESQTVDVLGLPISKVTIQVAAGRNLAVLVEAAVRNTILQLRGIDTLRDFMDRQRLAMQDPDSQFPGKLV.

Catalysis depends on residues histidine 146 and lysine 167. 161–168 (GDSGLGKS) lines the ATP pocket. Serine 168 provides a ligand contact to Mg(2+). Aspartate 185 (proton acceptor; for phosphorylation activity. Proton donor; for dephosphorylation activity) is an active-site residue. The tract at residues 209 to 218 (LEVRGLGLLD) is important for the catalytic mechanism of both phosphorylation and dephosphorylation. Residue glutamate 210 participates in Mg(2+) binding. Residue arginine 250 is part of the active site. The segment at 271-276 (QVAAGR) is important for the catalytic mechanism of dephosphorylation.

It belongs to the HPrK/P family. Homohexamer. The cofactor is Mg(2+).

It catalyses the reaction [HPr protein]-L-serine + ATP = [HPr protein]-O-phospho-L-serine + ADP + H(+). The enzyme catalyses [HPr protein]-O-phospho-L-serine + phosphate + H(+) = [HPr protein]-L-serine + diphosphate. In terms of biological role, catalyzes the ATP- as well as the pyrophosphate-dependent phosphorylation of a specific serine residue in HPr, a phosphocarrier protein of the phosphoenolpyruvate-dependent sugar phosphotransferase system (PTS). HprK/P also catalyzes the pyrophosphate-producing, inorganic phosphate-dependent dephosphorylation (phosphorolysis) of seryl-phosphorylated HPr (P-Ser-HPr). This is HPr kinase/phosphorylase from Burkholderia ambifaria (strain ATCC BAA-244 / DSM 16087 / CCUG 44356 / LMG 19182 / AMMD) (Burkholderia cepacia (strain AMMD)).